The following is a 228-amino-acid chain: Probable septum site-determining protein MinC (228 aa).

Belongs to the MinC family. In terms of assembly, interacts with MinD and FtsZ.

Cell division inhibitor that blocks the formation of polar Z ring septums. Rapidly oscillates between the poles of the cell to destabilize FtsZ filaments that have formed before they mature into polar Z rings. Prevents FtsZ polymerization. This is Probable septum site-determining protein MinC from Bacillus mycoides (strain KBAB4) (Bacillus weihenstephanensis).